Consider the following 682-residue polypeptide: Potassium-transporting ATPase ATP-binding subunit (682 aa).

4 helical membrane-spanning segments follow: residues 35-55 (VMFIVWVGSLLTTLLAIAMAG), 62-82 (ATFTAAVSIWLWFTVLFANFA), 219-239 (IALTILLIALTLVFLLATATI), and 254-274 (VLVALLVCLIPTTIGGLLSAI). The active-site 4-aspartylphosphate intermediate is Asp-307. Residues Asp-344, Glu-348, 377–384 (FTAQTRMS), and Lys-395 each bind ATP. Mg(2+) contacts are provided by Asp-518 and Asp-522. The next 3 membrane-spanning stretches (helical) occupy residues 588-608 (FAIIPAAFAAVYPQLAMLNVM), 616-636 (AILSAVIFNALIIVFLIPLAL), and 656-676 (IYGLGGLLVPFIGIKAIDLLL).

The protein belongs to the cation transport ATPase (P-type) (TC 3.A.3) family. Type IA subfamily. The system is composed of three essential subunits: KdpA, KdpB and KdpC.

It localises to the cell inner membrane. It catalyses the reaction K(+)(out) + ATP + H2O = K(+)(in) + ADP + phosphate + H(+). In terms of biological role, part of the high-affinity ATP-driven potassium transport (or Kdp) system, which catalyzes the hydrolysis of ATP coupled with the electrogenic transport of potassium into the cytoplasm. This subunit is responsible for energy coupling to the transport system and for the release of the potassium ions to the cytoplasm. The protein is Potassium-transporting ATPase ATP-binding subunit of Klebsiella pneumoniae subsp. pneumoniae (strain ATCC 700721 / MGH 78578).